Reading from the N-terminus, the 349-residue chain is MGVQFSAAELTDLVGGELSGDPGRLVVGARPPEEAEGGDLTFALDLHARKLIETTRAGVAITPVRWPFEHLTQIVVANPRLAMAQVLAHMFPQPIAMPPAGIHPSAVVHPSAVVHPSASVAALVYVGPRAAVGANTHLFPGVYVGAEAVVGSECLIYPNVVLMDGIRLGDRVVIHAGSVLGSDGYGFVPTGERHLKVPQVGTVVIGDDVEVGANVAVDRATMGQTEIQAGTKIDNLVHIGHNDRIGRHCLIVSQVGLAGSVKVGDRTVIAGQAGVANQTTVGADCLVLARSGVTKDLPDHSKVSGFPAQDHLLELKQQAARSRLPQIVEQMRQMQRRIEQLEVQLLGRL.

The Proton acceptor role is filled by His-241.

This sequence belongs to the transferase hexapeptide repeat family. LpxD subfamily. In terms of assembly, homotrimer.

The enzyme catalyses a UDP-3-O-[(3R)-3-hydroxyacyl]-alpha-D-glucosamine + a (3R)-hydroxyacyl-[ACP] = a UDP-2-N,3-O-bis[(3R)-3-hydroxyacyl]-alpha-D-glucosamine + holo-[ACP] + H(+). It functions in the pathway bacterial outer membrane biogenesis; LPS lipid A biosynthesis. Catalyzes the N-acylation of UDP-3-O-acylglucosamine using 3-hydroxyacyl-ACP as the acyl donor. Is involved in the biosynthesis of lipid A, a phosphorylated glycolipid that anchors the lipopolysaccharide to the outer membrane of the cell. The sequence is that of UDP-3-O-acylglucosamine N-acyltransferase 1 from Gloeobacter violaceus (strain ATCC 29082 / PCC 7421).